The chain runs to 323 residues: Acetyl-coenzyme A carboxylase carboxyl transferase subunit alpha (323 aa).

In terms of domain architecture, CoA carboxyltransferase C-terminal spans 35–296; the sequence is EVLSELDELR…GMTLKKCLDE (262 aa).

Belongs to the AccA family. Acetyl-CoA carboxylase is a heterohexamer composed of biotin carboxyl carrier protein (AccB), biotin carboxylase (AccC) and two subunits each of ACCase subunit alpha (AccA) and ACCase subunit beta (AccD).

It is found in the cytoplasm. It catalyses the reaction N(6)-carboxybiotinyl-L-lysyl-[protein] + acetyl-CoA = N(6)-biotinyl-L-lysyl-[protein] + malonyl-CoA. Its pathway is lipid metabolism; malonyl-CoA biosynthesis; malonyl-CoA from acetyl-CoA: step 1/1. Functionally, component of the acetyl coenzyme A carboxylase (ACC) complex. First, biotin carboxylase catalyzes the carboxylation of biotin on its carrier protein (BCCP) and then the CO(2) group is transferred by the carboxyltransferase to acetyl-CoA to form malonyl-CoA. The polypeptide is Acetyl-coenzyme A carboxylase carboxyl transferase subunit alpha (Aquifex aeolicus (strain VF5)).